A 156-amino-acid chain; its full sequence is Small ribosomal subunit protein uS7 (156 aa).

It belongs to the universal ribosomal protein uS7 family. In terms of assembly, part of the 30S ribosomal subunit. Contacts proteins S9 and S11.

In terms of biological role, one of the primary rRNA binding proteins, it binds directly to 16S rRNA where it nucleates assembly of the head domain of the 30S subunit. Is located at the subunit interface close to the decoding center, probably blocks exit of the E-site tRNA. The protein is Small ribosomal subunit protein uS7 of Wigglesworthia glossinidia brevipalpis.